A 210-amino-acid polypeptide reads, in one-letter code: C4-dicarboxylate TRAP transporter small permease protein DctQ (210 aa).

The next 4 membrane-spanning stretches (helical) occupy residues 13–33 (EGLIAFLLAAMTLVTFVYVVL), 77–97 (ALFAWLIFLGIAYGVRTAGHL), 113–133 (VLGVIACLACLGYAGLLCVAS), and 160–180 (IGLIVPVGFALVFIRFAEILV).

It belongs to the TRAP transporter small permease family. The complex comprises the extracytoplasmic solute receptor protein DctP, and the two transmembrane proteins DctQ and DctM.

Its subcellular location is the cell inner membrane. Functionally, part of the tripartite ATP-independent periplasmic (TRAP) transport system DctPQM involved in C4-dicarboxylates uptake. The protein is C4-dicarboxylate TRAP transporter small permease protein DctQ of Pseudomonas aeruginosa (strain ATCC 15692 / DSM 22644 / CIP 104116 / JCM 14847 / LMG 12228 / 1C / PRS 101 / PAO1).